The following is a 160-amino-acid chain: Major pollen allergen Bet v 1-E (160 aa).

Residues lysine 55, tyrosine 82, tyrosine 84, and asparagine 101 each coordinate brassinolide.

It belongs to the BetVI family.

The protein localises to the cytoplasm. Its function is as follows. May be a general steroid carrier protein. The polypeptide is Major pollen allergen Bet v 1-E (BETV1E) (Betula pendula (European white birch)).